The sequence spans 262 residues: Proteasome subunit alpha (262 aa).

Positions 235 to 262 (LLPTTGESDAGDSGADGSPSGDSPDTSA) are disordered.

It belongs to the peptidase T1A family. The 20S proteasome core is composed of 14 alpha and 14 beta subunits that assemble into four stacked heptameric rings, resulting in a barrel-shaped structure. The two inner rings, each composed of seven catalytic beta subunits, are sandwiched by two outer rings, each composed of seven alpha subunits. The catalytic chamber with the active sites is on the inside of the barrel. Has a gated structure, the ends of the cylinder being occluded by the N-termini of the alpha-subunits. Is capped by the proteasome-associated ATPase, ARC.

Its subcellular location is the cytoplasm. Its pathway is protein degradation; proteasomal Pup-dependent pathway. The formation of the proteasomal ATPase ARC-20S proteasome complex, likely via the docking of the C-termini of ARC into the intersubunit pockets in the alpha-rings, may trigger opening of the gate for substrate entry. Interconversion between the open-gate and close-gate conformations leads to a dynamic regulation of the 20S proteasome proteolysis activity. In terms of biological role, component of the proteasome core, a large protease complex with broad specificity involved in protein degradation. The sequence is that of Proteasome subunit alpha from Gordonia bronchialis (strain ATCC 25592 / DSM 43247 / BCRC 13721 / JCM 3198 / KCTC 3076 / NBRC 16047 / NCTC 10667) (Rhodococcus bronchialis).